A 127-amino-acid polypeptide reads, in one-letter code: Holo-[acyl-carrier-protein] synthase (127 aa).

Mg(2+) is bound by residues D8 and E60.

This sequence belongs to the P-Pant transferase superfamily. AcpS family. The cofactor is Mg(2+).

The protein localises to the cytoplasm. The enzyme catalyses apo-[ACP] + CoA = holo-[ACP] + adenosine 3',5'-bisphosphate + H(+). In terms of biological role, transfers the 4'-phosphopantetheine moiety from coenzyme A to a Ser of acyl-carrier-protein. The sequence is that of Holo-[acyl-carrier-protein] synthase from Marinomonas sp. (strain MWYL1).